The primary structure comprises 114 residues: Transmembrane protein 256 homolog (114 aa).

An N-terminal signal peptide occupies residues 1–25 (MAAGRVWGRLGAVSGALAVTAGAYG). Residues 26–64 (AHGFRRSDRDEYLKELFETGNRYHFLHSLALLAVPHCRR) are Extracellular-facing. Residues 65–85 (PLLAGSLLTSGIVLFSGTFYY) traverse the membrane as a helical segment. At 86–93 (QALSGDPT) the chain is on the cytoplasmic side. Residues 94–114 (LTKAAPYGGTLLILGWAAMAL) traverse the membrane as a helical segment.

Belongs to the TMEM256 family.

The protein localises to the cell membrane. The sequence is that of Transmembrane protein 256 homolog from Bufo gargarizans (Asian toad).